Reading from the N-terminus, the 438-residue chain is UPF0229 protein Smed_1028 (438 aa).

Positions 55-107 (PARGVNEPAFQPDSNSGERRHVLPGNREFAAGDRIPKRGGGGGAGNAGAGTGQ) are disordered. Residues 92 to 105 (RGGGGGAGNAGAGT) are compositionally biased toward gly residues.

It belongs to the UPF0229 family.

This Sinorhizobium medicae (strain WSM419) (Ensifer medicae) protein is UPF0229 protein Smed_1028.